Consider the following 505-residue polypeptide: ATP synthase subunit beta (505 aa).

Residue 158–165 (GGAGVGKT) participates in ATP binding.

This sequence belongs to the ATPase alpha/beta chains family. In terms of assembly, F-type ATPases have 2 components, CF(1) - the catalytic core - and CF(0) - the membrane proton channel. CF(1) has five subunits: alpha(3), beta(3), gamma(1), delta(1), epsilon(1). CF(0) has three main subunits: a(1), b(2) and c(9-12). The alpha and beta chains form an alternating ring which encloses part of the gamma chain. CF(1) is attached to CF(0) by a central stalk formed by the gamma and epsilon chains, while a peripheral stalk is formed by the delta and b chains.

It localises to the cell inner membrane. The catalysed reaction is ATP + H2O + 4 H(+)(in) = ADP + phosphate + 5 H(+)(out). Produces ATP from ADP in the presence of a proton gradient across the membrane. The catalytic sites are hosted primarily by the beta subunits. This chain is ATP synthase subunit beta, found in Parabacteroides distasonis (strain ATCC 8503 / DSM 20701 / CIP 104284 / JCM 5825 / NCTC 11152).